The following is a 192-amino-acid chain: Pyridoxine/pyridoxamine 5'-phosphate oxidase (192 aa).

Residues 41-46, 56-57, Arg-62, Lys-63, and Gln-85 contribute to the FMN site; these read RMMLLK and FT. Substrate is bound at residue Lys-46. Substrate contacts are provided by Tyr-103, Arg-107, and Ser-111. FMN-binding positions include 120–121 and Trp-165; that span reads QS. 171–173 provides a ligand contact to substrate; sequence RLH. Arg-175 is an FMN binding site.

This sequence belongs to the pyridoxamine 5'-phosphate oxidase family. In terms of assembly, homodimer. Requires FMN as cofactor.

It carries out the reaction pyridoxamine 5'-phosphate + O2 + H2O = pyridoxal 5'-phosphate + H2O2 + NH4(+). The catalysed reaction is pyridoxine 5'-phosphate + O2 = pyridoxal 5'-phosphate + H2O2. It functions in the pathway cofactor metabolism; pyridoxal 5'-phosphate salvage; pyridoxal 5'-phosphate from pyridoxamine 5'-phosphate: step 1/1. The protein operates within cofactor metabolism; pyridoxal 5'-phosphate salvage; pyridoxal 5'-phosphate from pyridoxine 5'-phosphate: step 1/1. Its function is as follows. Catalyzes the oxidation of either pyridoxine 5'-phosphate (PNP) or pyridoxamine 5'-phosphate (PMP) into pyridoxal 5'-phosphate (PLP). The protein is Pyridoxine/pyridoxamine 5'-phosphate oxidase of Zymomonas mobilis subsp. mobilis (strain ATCC 31821 / ZM4 / CP4).